The following is a 221-amino-acid chain: Abscisic acid receptor PYL1 (221 aa).

Positions 1–11 are enriched in low complexity; sequence MANSESSSSPV. The tract at residues 1 to 22 is disordered; sequence MANSESSSSPVNEEENSQRIST. Ala-2 carries the N-acetylalanine modification. The tract at residues 50–206 is START-like; that stretch reads YQLGNGRCSS…NLQKLASITE (157 aa). Residues Lys-86, 116-121, 143-149, and Glu-171 each bind abscisate; these read ANTSRE and RLRNYKS. The Gate loop motif lies at 112–116; that stretch reads SGLPA. Residues 142 to 144 carry the Latch loop motif; that stretch reads HRL.

Belongs to the PYR/PYL/RCAR abscisic acid intracellular receptor family. As to quaternary structure, homodimer. Binds ABA on one subunit only. Interacts with HAB1, ABI1 and ABI2, and possibly with other PP2Cs. Binds to CARs protein in an ABA-independent manner, both at the plasma membrane and in the nucleus. Interacts directly with CAR1 and CAR4.

It is found in the cytoplasm. The protein localises to the nucleus. Its subcellular location is the cell membrane. Functionally, receptor for abscisic acid (ABA) required for ABA-mediated responses such as stomatal closure and germination inhibition. Inhibits the activity of group-A protein phosphatases type 2C (PP2Cs) when activated by ABA. Can be activated by both (-)-ABA and (+)-ABA. This chain is Abscisic acid receptor PYL1 (PYL1), found in Arabidopsis thaliana (Mouse-ear cress).